We begin with the raw amino-acid sequence, 278 residues long: Small ribosomal subunit protein uS3 (278 aa).

Residues 39-107 enclose the KH type-2 domain; that stretch reads LRKAIAKKYV…KVQLNIVEIS (69 aa). Residues 244-278 are disordered; it reads AKPKRVTKKAEAEASAEEKPKRAAKKAENITKEEE. A compositionally biased stretch (basic and acidic residues) spans 251-278; that stretch reads KKAEAEASAEEKPKRAAKKAENITKEEE.

It belongs to the universal ribosomal protein uS3 family. In terms of assembly, part of the 30S ribosomal subunit. Forms a tight complex with proteins S10 and S14.

Binds the lower part of the 30S subunit head. Binds mRNA in the 70S ribosome, positioning it for translation. This chain is Small ribosomal subunit protein uS3, found in Dehalococcoides mccartyi (strain ATCC BAA-2266 / KCTC 15142 / 195) (Dehalococcoides ethenogenes (strain 195)).